The following is a 123-amino-acid chain: Inter-alpha-trypsin inhibitor (123 aa).

BPTI/Kunitz inhibitor domains are found at residues 5–55 and 61–111; these read CQLG…LQTC and CNLP…KEYC. Disulfide bonds link Cys5-Cys55, Cys14-Cys38, Cys30-Cys51, Cys61-Cys111, Cys70-Cys94, and Cys86-Cys107. The N-linked (GlcNAc...) asparagine glycan is linked to Asn24.

Its subcellular location is the secreted. Its function is as follows. This inhibitory fragment, released from native ITI after limited proteolysis with trypsin, contains two homologous domains. Whereas the second domain is a strong inhibitor of trypsin, the first domain interacts weakly with PMN-granulocytic elastase and not at all with pancreatic elastase. In Capra hircus (Goat), this protein is Inter-alpha-trypsin inhibitor.